Here is a 641-residue protein sequence, read N- to C-terminus: FAD-binding monooxygenase ausB (641 aa).

Residues 1 to 68 (MAIGPKPESI…DSTTNVPYSL (68 aa)) form a disordered region. Over residues 49-68 (WLTSTDQPQPDSTTNVPYSL) the composition is skewed to polar residues. FAD contacts are provided by residues 115–118 (TWYW), 127–128 (DI), and tyrosine 133. 125-127 (MCD) serves as a coordination point for NADP(+). NADP(+)-binding positions include 272 to 278 (TGSTAVQ) and 295 to 296 (RT).

The protein belongs to the FAD-binding monooxygenase family. FAD is required as a cofactor.

The catalysed reaction is protoaustinoid A + AH2 + O2 = berkeleyone A + A + H2O. The protein operates within secondary metabolite biosynthesis; terpenoid biosynthesis. Functionally, FAD-binding monooxygenase; part of the gene cluster A that mediates the biosynthesis of the fungal meroterpenoid acetoxydehydroaustin. The first step of the pathway is the synthesis of 3,5-dimethylorsellinic acid by the polyketide synthase ausA. 3,5-dimethylorsellinic acid is then prenylated by the polyprenyl transferase ausN. Further epoxidation by the FAD-dependent monooxygenase ausM and cyclization by the probable terpene cyclase ausL lead to the formation of protoaustinoid A. Protoaustinoid A is then oxidized to spiro-lactone preaustinoid A3 by the combined action of the FAD-binding monooxygenases ausB and ausC, and the dioxygenase ausE. Acid-catalyzed keto-rearrangement and ring contraction of the tetraketide portion of preaustinoid A3 by ausJ lead to the formation of preaustinoid A4. The aldo-keto reductase ausK, with the help of ausH, is involved in the next step by transforming preaustinoid A4 into isoaustinone which is in turn hydroxylated by the P450 monooxygenase ausI to form austinolide. The cytochrome P450 monooxygenase ausG then modifies austinolide to austinol. Austinol is further acetylated to austin by the O-acetyltransferase ausP, which spontaneously changes to dehydroaustin. The cytochrome P450 monooxygenase then converts dehydroaustin is into 7-dehydrodehydroaustin. The hydroxylation catalyzed by ausR permits the second O-acetyltransferase ausQ to add an additional acetyl group to the molecule, leading to the formation of acetoxydehydroaustin. Due to genetic rearrangements of the clusters and the subsequent loss of some enzymes, the end product of the Penicillium brasilianum austinoid biosynthesis clusters is acetoxydehydroaustin. The chain is FAD-binding monooxygenase ausB from Penicillium brasilianum.